The chain runs to 37 residues: Large ribosomal subunit protein bL36 (37 aa).

The protein belongs to the bacterial ribosomal protein bL36 family.

This is Large ribosomal subunit protein bL36 (rpmJ) from Geobacillus stearothermophilus (Bacillus stearothermophilus).